The primary structure comprises 142 residues: Small ribosomal subunit protein uS12 (142 aa).

The protein belongs to the universal ribosomal protein uS12 family. In terms of assembly, part of the 30S ribosomal subunit.

In terms of biological role, with S4 and S5 plays an important role in translational accuracy. Located at the interface of the 30S and 50S subunits. The sequence is that of Small ribosomal subunit protein uS12 from Thermoplasma volcanium (strain ATCC 51530 / DSM 4299 / JCM 9571 / NBRC 15438 / GSS1).